The sequence spans 496 residues: MHAKSLTELRAALAAKECSAVELAQLYLKRIDAARDLNAFVHVDADLTLAQAKAADAELARGAGGPLTGVPIAHKDVFVTRGWRSTAGSKMLENYQSPFDATVVARLQAAGMVTLGKTNMDEFAMGSSNENSAFGAVKNPWDTHAVPGGSSGGSSAAVAARLAPAATGTDTGGSIRQPASFAGVTGIKPTYGRVSRYGMIAFASSLDQGGPMAQSASDCALLLNAMAGFDERDSTSLERDDEDFTRHLGQPWTAGSDAARPLAGLRIGLPNEYFGAGLADDVRATIDAALKQYEALGATLVPVSLPKTELSIPVYYVIAPAEASSNLSRFDGVRFGHRAAQYGDLLDMYKKSRAEGFGPEVKRRILVGTYVLSHGYYDAYYLQAQKIRRIIAQDFQEAFKSCDVIMGPASPTVAWDLGAKGDDPVQMYLADIYTLSVSLAGLPGMSVPCGFGAGANAKRPVGLQIIGNYFNEARMLQVADAFQRATDWHKQVPAGV.

Active-site charge relay system residues include Lys75 and Ser150. The active-site Acyl-ester intermediate is the Ser174.

This sequence belongs to the amidase family. GatA subfamily. Heterotrimer of A, B and C subunits.

The enzyme catalyses L-glutamyl-tRNA(Gln) + L-glutamine + ATP + H2O = L-glutaminyl-tRNA(Gln) + L-glutamate + ADP + phosphate + H(+). Its function is as follows. Allows the formation of correctly charged Gln-tRNA(Gln) through the transamidation of misacylated Glu-tRNA(Gln) in organisms which lack glutaminyl-tRNA synthetase. The reaction takes place in the presence of glutamine and ATP through an activated gamma-phospho-Glu-tRNA(Gln). The polypeptide is Glutamyl-tRNA(Gln) amidotransferase subunit A (Burkholderia vietnamiensis (strain G4 / LMG 22486) (Burkholderia cepacia (strain R1808))).